Reading from the N-terminus, the 385-residue chain is Glutamate 5-kinase (385 aa).

K17 is a binding site for ATP. Positions 64, 151, and 165 each coordinate substrate. 185–186 is a binding site for ATP; it reads SD. A PUA domain is found at 291–367; the sequence is SGTVRVDAGA…DQIENVLGYS (77 aa).

The protein belongs to the glutamate 5-kinase family.

The protein localises to the cytoplasm. It catalyses the reaction L-glutamate + ATP = L-glutamyl 5-phosphate + ADP. It participates in amino-acid biosynthesis; L-proline biosynthesis; L-glutamate 5-semialdehyde from L-glutamate: step 1/2. Catalyzes the transfer of a phosphate group to glutamate to form L-glutamate 5-phosphate. The sequence is that of Glutamate 5-kinase from Methanosarcina mazei (strain ATCC BAA-159 / DSM 3647 / Goe1 / Go1 / JCM 11833 / OCM 88) (Methanosarcina frisia).